A 174-amino-acid chain; its full sequence is Gamma-crystallin F (174 aa).

2 consecutive Beta/gamma crystallin 'Greek key' domains span residues 2-40 (GKIT…RVDS) and 41-83 (GCWM…HLIP). The connecting peptide stretch occupies residues 84–87 (HSSS). Beta/gamma crystallin 'Greek key' domains are found at residues 88 to 128 (HRIR…HVIE) and 129 to 171 (GYWV…RRIM).

This sequence belongs to the beta/gamma-crystallin family.

Its function is as follows. Crystallins are the dominant structural components of the vertebrate eye lens. This Rattus norvegicus (Rat) protein is Gamma-crystallin F (Crygf).